The following is a 309-amino-acid chain: UDP-N-acetylenolpyruvoylglucosamine reductase (309 aa).

In terms of domain architecture, FAD-binding PCMH-type spans 34–221; the sequence is RVGGPAQVLF…TAAREAAQPI (188 aa). Residue R179 is part of the active site. S228 (proton donor) is an active-site residue. E298 is a catalytic residue.

This sequence belongs to the MurB family. Requires FAD as cofactor.

The protein localises to the cytoplasm. It catalyses the reaction UDP-N-acetyl-alpha-D-muramate + NADP(+) = UDP-N-acetyl-3-O-(1-carboxyvinyl)-alpha-D-glucosamine + NADPH + H(+). It functions in the pathway cell wall biogenesis; peptidoglycan biosynthesis. In terms of biological role, cell wall formation. The chain is UDP-N-acetylenolpyruvoylglucosamine reductase from Methylorubrum extorquens (strain CM4 / NCIMB 13688) (Methylobacterium extorquens).